The chain runs to 248 residues: Tetrachloro-P-hydroquinone reductive dehalogenase (248 aa).

Residues 2–84 (PEVSLYNYTM…EAAKLGKVGI (83 aa)) form the GST N-terminal domain. Residues 133–248 (YAEKYPELRS…RVMPNWKGGI (116 aa)) enclose the GST C-terminal domain.

This sequence belongs to the GST superfamily. In terms of assembly, homodimer.

It carries out the reaction 2,6-dichlorohydroquinone + glutathione disulfide + chloride + H(+) = 2,3,6-trichlorohydroquinone + 2 glutathione. It catalyses the reaction 2,3,6-trichlorohydroquinone + glutathione disulfide + chloride = 2,3,5,6-tetrachlorohydroquinone + 2 glutathione. It functions in the pathway xenobiotic degradation; pentachlorophenol degradation. Functionally, sequential reduction of tetrachloro-p-hydroquinone to monochlorophenol, using glutathione as the reducing agent. The polypeptide is Tetrachloro-P-hydroquinone reductive dehalogenase (pcpC) (Sphingobium chlorophenolicum).